A 281-amino-acid polypeptide reads, in one-letter code: Cardosin-F (281 aa).

One can recognise a Peptidase A1 domain in the interval 18 to 278 (YYGEIGIGTP…DYGNLLVGFA (261 aa)). Residue Asp36 is part of the active site. Residues Cys181 and Cys185 are joined by a disulfide bond. Residue Asp190 is part of the active site. An N-linked (GlcNAc...) asparagine glycan is attached at Asn213.

The protein belongs to the peptidase A1 family. Heterodimer of a light chain and a heavy chain. An intermediate form is produced first, and undergoes proteolytic processing to remove the internal plant-specific insert (PSI) and the propeptide. N-glycosylated. Pistils.

The protein localises to the microsome membrane. It is found in the protein storage vacuole. Its subcellular location is the secreted. It localises to the cell wall. The protein resides in the extracellular space. The protein localises to the extracellular matrix. Inhibited by pepstatin. In terms of biological role, aspartic protease with a high preference for bonds between hydrophobic residues. The sequence is that of Cardosin-F from Cynara cardunculus (Cardoon).